The following is a 384-amino-acid chain: S-adenosylmethionine synthase (384 aa).

His15 is an ATP binding site. Asp17 serves as a coordination point for Mg(2+). A K(+)-binding site is contributed by Glu43. Residues Glu56 and Gln99 each coordinate L-methionine. Residues Gln99 to Arg109 are flexible loop. ATP-binding positions include Asp164 to Lys166, Arg230 to Phe231, Asp239, Arg245 to Lys246, Ala262, and Lys266. Position 239 (Asp239) interacts with L-methionine. Lys270 contributes to the L-methionine binding site.

This sequence belongs to the AdoMet synthase family. In terms of assembly, homotetramer; dimer of dimers. Requires Mg(2+) as cofactor. K(+) serves as cofactor.

It is found in the cytoplasm. The enzyme catalyses L-methionine + ATP + H2O = S-adenosyl-L-methionine + phosphate + diphosphate. Its pathway is amino-acid biosynthesis; S-adenosyl-L-methionine biosynthesis; S-adenosyl-L-methionine from L-methionine: step 1/1. Catalyzes the formation of S-adenosylmethionine (AdoMet) from methionine and ATP. The overall synthetic reaction is composed of two sequential steps, AdoMet formation and the subsequent tripolyphosphate hydrolysis which occurs prior to release of AdoMet from the enzyme. This chain is S-adenosylmethionine synthase, found in Pasteurella multocida (strain Pm70).